The chain runs to 538 residues: Bifunctional purine biosynthesis protein PurH (538 aa).

An MGS-like domain is found at 6–158; the sequence is KHIPAPDLHR…KNHAYVATVV (153 aa).

This sequence belongs to the PurH family.

It catalyses the reaction (6R)-10-formyltetrahydrofolate + 5-amino-1-(5-phospho-beta-D-ribosyl)imidazole-4-carboxamide = 5-formamido-1-(5-phospho-D-ribosyl)imidazole-4-carboxamide + (6S)-5,6,7,8-tetrahydrofolate. The catalysed reaction is IMP + H2O = 5-formamido-1-(5-phospho-D-ribosyl)imidazole-4-carboxamide. Its pathway is purine metabolism; IMP biosynthesis via de novo pathway; 5-formamido-1-(5-phospho-D-ribosyl)imidazole-4-carboxamide from 5-amino-1-(5-phospho-D-ribosyl)imidazole-4-carboxamide (10-formyl THF route): step 1/1. It participates in purine metabolism; IMP biosynthesis via de novo pathway; IMP from 5-formamido-1-(5-phospho-D-ribosyl)imidazole-4-carboxamide: step 1/1. This Brucella anthropi (strain ATCC 49188 / DSM 6882 / CCUG 24695 / JCM 21032 / LMG 3331 / NBRC 15819 / NCTC 12168 / Alc 37) (Ochrobactrum anthropi) protein is Bifunctional purine biosynthesis protein PurH.